The chain runs to 239 residues: tRNA (guanine-N(7)-)-methyltransferase (239 aa).

S-adenosyl-L-methionine-binding residues include Glu-69, Glu-94, Asp-121, and Asp-144. Asp-144 is an active-site residue. Residue Lys-148 coordinates substrate. The interval 150-155 (RHNKRR) is interaction with RNA. Substrate is bound by residues Asp-180 and 217-220 (TKFE).

This sequence belongs to the class I-like SAM-binding methyltransferase superfamily. TrmB family. In terms of assembly, monomer.

The catalysed reaction is guanosine(46) in tRNA + S-adenosyl-L-methionine = N(7)-methylguanosine(46) in tRNA + S-adenosyl-L-homocysteine. It functions in the pathway tRNA modification; N(7)-methylguanine-tRNA biosynthesis. In terms of biological role, catalyzes the formation of N(7)-methylguanine at position 46 (m7G46) in tRNA. The polypeptide is tRNA (guanine-N(7)-)-methyltransferase (Yersinia enterocolitica serotype O:8 / biotype 1B (strain NCTC 13174 / 8081)).